Here is a 251-residue protein sequence, read N- to C-terminus: Hydroxyacylglutathione hydrolase (251 aa).

7 residues coordinate Zn(2+): H53, H55, D57, H58, H110, D127, and H165.

Belongs to the metallo-beta-lactamase superfamily. Glyoxalase II family. Monomer. Requires Zn(2+) as cofactor.

The catalysed reaction is an S-(2-hydroxyacyl)glutathione + H2O = a 2-hydroxy carboxylate + glutathione + H(+). It participates in secondary metabolite metabolism; methylglyoxal degradation; (R)-lactate from methylglyoxal: step 2/2. In terms of biological role, thiolesterase that catalyzes the hydrolysis of S-D-lactoyl-glutathione to form glutathione and D-lactic acid. This is Hydroxyacylglutathione hydrolase from Escherichia coli O17:K52:H18 (strain UMN026 / ExPEC).